We begin with the raw amino-acid sequence, 410 residues long: Elongation factor Tu (410 aa).

A tr-type G domain is found at 10-214 (KPHVNIGTIG…EVDAYIPTPE (205 aa)). Residues 19–26 (GHVDHGKT) are G1. 19–26 (GHVDHGKT) lines the GTP pocket. T26 lines the Mg(2+) pocket. Residues 60–64 (GITIN) are G2. A G3 region spans residues 81–84 (DCPG). GTP is bound by residues 81–85 (DCPGH) and 136–139 (NKAD). The interval 136 to 139 (NKAD) is G4. Residues 174 to 176 (SAL) are G5.

This sequence belongs to the TRAFAC class translation factor GTPase superfamily. Classic translation factor GTPase family. EF-Tu/EF-1A subfamily. In terms of assembly, monomer.

It localises to the cytoplasm. It carries out the reaction GTP + H2O = GDP + phosphate + H(+). Its function is as follows. GTP hydrolase that promotes the GTP-dependent binding of aminoacyl-tRNA to the A-site of ribosomes during protein biosynthesis. In Arthrospira platensis (Spirulina platensis), this protein is Elongation factor Tu.